An 85-amino-acid chain; its full sequence is Transcriptional repressor protein KorC (85 aa).

Positions 28–47 form a DNA-binding region, H-T-H motif; it reads EVLRLAGLTGGKAAKVLGLG.

Acts with KorA as corepressor in the control of the kilC and kilE operons. The polypeptide is Transcriptional repressor protein KorC (korC) (Escherichia coli).